The sequence spans 119 residues: LELDETIRTVPLNDKGGTVVLSLEQVKEGKLFNYACAQCHAGGVTKTNQNVGLEPEALAGALPNRMKNPTTYDGEEEISEIPSIKSANIFRNLTDEDLKAIAEHILLEPLVVGTKWGGK.

The heme c site is built by Cys-36, Cys-39, and His-40.

The protein belongs to the cytochrome c family. PsbV subfamily. As to quaternary structure, PSII is composed of 1 copy each of membrane proteins PsbA, PsbB, PsbC, PsbD, PsbE, PsbF, PsbH, PsbI, PsbJ, PsbK, PsbL, PsbM, PsbT, PsbX, PsbY, PsbZ, Psb30/Ycf12, peripheral proteins PsbO, CyanoQ (PsbQ), PsbU, PsbV and a large number of cofactors. It forms dimeric complexes. It depends on heme c as a cofactor.

Its subcellular location is the cellular thylakoid membrane. Its function is as follows. One of the extrinsic, lumenal subunits of photosystem II (PSII). PSII is a light-driven water plastoquinone oxidoreductase, using light energy to abstract electrons from H(2)O, generating a proton gradient subsequently used for ATP formation. The extrinsic proteins stabilize the structure of photosystem II oxygen-evolving complex (OEC), the ion environment of oxygen evolution and protect the OEC against heat-induced inactivation. Low-potential cytochrome c that plays a role in the OEC of PSII. The polypeptide is Photosystem II extrinsic protein V (psbV) (Aphanizomenon flos-aquae).